The sequence spans 643 residues: tRNA 5-methylaminomethyl-2-thiouridine biosynthesis bifunctional protein MnmC (643 aa).

Positions 1-223 (MPDRLVSATL…VDDRLVGDYA (223 aa)) are tRNA (mnm(5)s(2)U34)-methyltransferase. The tract at residues 247 to 643 (IGAGLAGCAV…LRARRVGSAG (397 aa)) is FAD-dependent cmnm(5)s(2)U34 oxidoreductase.

The protein in the N-terminal section; belongs to the methyltransferase superfamily. tRNA (mnm(5)s(2)U34)-methyltransferase family. In the C-terminal section; belongs to the DAO family. The cofactor is FAD.

It is found in the cytoplasm. The enzyme catalyses 5-aminomethyl-2-thiouridine(34) in tRNA + S-adenosyl-L-methionine = 5-methylaminomethyl-2-thiouridine(34) in tRNA + S-adenosyl-L-homocysteine + H(+). In terms of biological role, catalyzes the last two steps in the biosynthesis of 5-methylaminomethyl-2-thiouridine (mnm(5)s(2)U) at the wobble position (U34) in tRNA. Catalyzes the FAD-dependent demodification of cmnm(5)s(2)U34 to nm(5)s(2)U34, followed by the transfer of a methyl group from S-adenosyl-L-methionine to nm(5)s(2)U34, to form mnm(5)s(2)U34. The polypeptide is tRNA 5-methylaminomethyl-2-thiouridine biosynthesis bifunctional protein MnmC (Burkholderia orbicola (strain MC0-3)).